The sequence spans 360 residues: Phospho-N-acetylmuramoyl-pentapeptide-transferase (360 aa).

Transmembrane regions (helical) follow at residues 26–46, 70–90, 94–114, 136–156, 164–184, 199–219, 236–256, 263–283, 289–309, and 339–359; these read GVLA…FFIA, GTPT…TLLW, GNPL…IGFV, LQSL…SNPV, FIPH…YFVI, GLAI…AYVS, SGQM…FLWF, VFMG…VAIV, VLFI…IQVV, and AVRF…SLKI.

This sequence belongs to the glycosyltransferase 4 family. MraY subfamily. Mg(2+) is required as a cofactor.

It localises to the cell inner membrane. The enzyme catalyses UDP-N-acetyl-alpha-D-muramoyl-L-alanyl-gamma-D-glutamyl-meso-2,6-diaminopimeloyl-D-alanyl-D-alanine + di-trans,octa-cis-undecaprenyl phosphate = di-trans,octa-cis-undecaprenyl diphospho-N-acetyl-alpha-D-muramoyl-L-alanyl-D-glutamyl-meso-2,6-diaminopimeloyl-D-alanyl-D-alanine + UMP. It functions in the pathway cell wall biogenesis; peptidoglycan biosynthesis. Functionally, catalyzes the initial step of the lipid cycle reactions in the biosynthesis of the cell wall peptidoglycan: transfers peptidoglycan precursor phospho-MurNAc-pentapeptide from UDP-MurNAc-pentapeptide onto the lipid carrier undecaprenyl phosphate, yielding undecaprenyl-pyrophosphoryl-MurNAc-pentapeptide, known as lipid I. This Acidithiobacillus ferrooxidans (strain ATCC 23270 / DSM 14882 / CIP 104768 / NCIMB 8455) (Ferrobacillus ferrooxidans (strain ATCC 23270)) protein is Phospho-N-acetylmuramoyl-pentapeptide-transferase.